A 444-amino-acid chain; its full sequence is Methylenetetrahydrofolate--tRNA-(uracil-5-)-methyltransferase TrmFO (444 aa).

FAD is bound at residue 9–14 (GAGLAG).

It belongs to the MnmG family. TrmFO subfamily. It depends on FAD as a cofactor.

It localises to the cytoplasm. The enzyme catalyses uridine(54) in tRNA + (6R)-5,10-methylene-5,6,7,8-tetrahydrofolate + NADH + H(+) = 5-methyluridine(54) in tRNA + (6S)-5,6,7,8-tetrahydrofolate + NAD(+). It catalyses the reaction uridine(54) in tRNA + (6R)-5,10-methylene-5,6,7,8-tetrahydrofolate + NADPH + H(+) = 5-methyluridine(54) in tRNA + (6S)-5,6,7,8-tetrahydrofolate + NADP(+). Catalyzes the folate-dependent formation of 5-methyl-uridine at position 54 (M-5-U54) in all tRNAs. This chain is Methylenetetrahydrofolate--tRNA-(uracil-5-)-methyltransferase TrmFO, found in Koribacter versatilis (strain Ellin345).